The following is a 342-amino-acid chain: Protein RecA (342 aa).

ATP is bound at residue 65–72; it reads GPESSGKT.

The protein belongs to the RecA family.

The protein resides in the cytoplasm. Its function is as follows. Can catalyze the hydrolysis of ATP in the presence of single-stranded DNA, the ATP-dependent uptake of single-stranded DNA by duplex DNA, and the ATP-dependent hybridization of homologous single-stranded DNAs. It interacts with LexA causing its activation and leading to its autocatalytic cleavage. This Teredinibacter turnerae (strain ATCC 39867 / T7901) protein is Protein RecA.